Here is a 211-residue protein sequence, read N- to C-terminus: MTGQTPLLEAKNLQCERDDRILFENLSFSVHSGDVVQIEGPNGAGKTTLLKLLCGLAPLRQGELFWRGERMSQARPQFLSSLLYLGHKTGVKALLTPLENLRAWCAQREDVNEERMMSALETVGLAGYEYSPCNSLSAGQQRRAALARLHVSSAPLWVLDEAFTAIDKKGVAQLETLLREKANGGGAVILTTHHSLHLSGEVRRIQLGAVS.

Residues 8–210 (LEAKNLQCER…EVRRIQLGAV (203 aa)) enclose the ABC transporter domain. Position 40 to 47 (40 to 47 (GPNGAGKT)) interacts with ATP.

This sequence belongs to the ABC transporter superfamily. CcmA exporter (TC 3.A.1.107) family. In terms of assembly, the complex is composed of two ATP-binding proteins (CcmA) and two transmembrane proteins (CcmB).

It is found in the cell inner membrane. It catalyses the reaction heme b(in) + ATP + H2O = heme b(out) + ADP + phosphate + H(+). Functionally, part of the ABC transporter complex CcmAB involved in the biogenesis of c-type cytochromes; once thought to export heme, this seems not to be the case, but its exact role is uncertain. Responsible for energy coupling to the transport system. In Hahella chejuensis (strain KCTC 2396), this protein is Cytochrome c biogenesis ATP-binding export protein CcmA.